The following is a 524-amino-acid chain: Methyl-CpG-binding domain-containing protein 8 (524 aa).

Positions Cys45–Ala60 are enriched in low complexity. The disordered stretch occupies residues Cys45 to Gln151. Residues Phe75–Gln84 show a composition bias toward polar residues. Basic and acidic residues predominate over residues Arg106 to Gln116. A compositionally biased stretch (acidic residues) spans Glu136–Glu149. Residues Val334–Lys406 enclose the MBD domain.

In terms of tissue distribution, expressed in shoot meristems, roots (vasculature and tips), hypocotyls (vasculature), cotyledons (vasculature and hydathodes), young leaves, buds, flowers and stems. Detected in stomata.

The protein localises to the nucleus. Probable transcriptional regulator. May regulates developmental traits such as flowering time. This chain is Methyl-CpG-binding domain-containing protein 8 (MBD8), found in Arabidopsis thaliana (Mouse-ear cress).